The primary structure comprises 79 residues: Sec-independent protein translocase protein TatA (79 aa).

The helical transmembrane segment at 1 to 21 (MGGFTSIWHWVIVLLVIVLLF) threads the bilayer. Residues 54-79 (ELKTLDAQATQTKVHETSEIKSKQES) are disordered. A compositionally biased stretch (basic and acidic residues) spans 66–79 (KVHETSEIKSKQES).

It belongs to the TatA/E family. In terms of assembly, the Tat system comprises two distinct complexes: a TatABC complex, containing multiple copies of TatA, TatB and TatC subunits, and a separate TatA complex, containing only TatA subunits. Substrates initially bind to the TatABC complex, which probably triggers association of the separate TatA complex to form the active translocon.

It localises to the cell inner membrane. Its function is as follows. Part of the twin-arginine translocation (Tat) system that transports large folded proteins containing a characteristic twin-arginine motif in their signal peptide across membranes. TatA could form the protein-conducting channel of the Tat system. The chain is Sec-independent protein translocase protein TatA from Helicobacter pylori (strain J99 / ATCC 700824) (Campylobacter pylori J99).